A 299-amino-acid polypeptide reads, in one-letter code: 4-sulfomuconolactone hydrolase (299 aa).

This sequence belongs to the metallo-dependent hydrolases superfamily. Sulfomuconolactone hydrolase family. As to quaternary structure, monomer. Requires Zn(2+) as cofactor.

The catalysed reaction is 4-sulfomuconolactone + H2O = maleylacetate + sulfite + 2 H(+). Its function is as follows. Involved in the degradation of 4-sulfocatechol which is a central intermediate in the degradation of substituted sulfonated benzenes. Catalyzes the hydrolytical desulfonation of 4-sulfomuconolactone to yield maleylacetate. This is 4-sulfomuconolactone hydrolase from Rhizobium radiobacter (Agrobacterium tumefaciens).